Consider the following 65-residue polypeptide: UPF0434 protein PSHAa1659 (65 aa).

The protein belongs to the UPF0434 family.

The sequence is that of UPF0434 protein PSHAa1659 from Pseudoalteromonas translucida (strain TAC 125).